The primary structure comprises 165 residues: PTS system glucose-specific EIIA component (165 aa).

Residues 34–138 form the PTS EIIA type-1 domain; it reads DPVFAQKMMG…SSITPIIISN (105 aa). Zn(2+) is bound by residues His71 and His86. The Tele-phosphohistidine intermediate; for EIIA activity role is filled by His86. His86 is subject to Phosphohistidine; by HPr.

Heterodimer with glycerol kinase (glpk). Zn(2+) serves as cofactor.

The protein localises to the cytoplasm. Functionally, the phosphoenolpyruvate-dependent sugar phosphotransferase system (sugar PTS), a major carbohydrate active transport system, catalyzes the phosphorylation of incoming sugar substrates concomitantly with their translocation across the cell membrane. The enzyme II complex composed of PtsG and Crr is involved in glucose transport. The sequence is that of PTS system glucose-specific EIIA component (crr) from Oceanobacillus iheyensis (strain DSM 14371 / CIP 107618 / JCM 11309 / KCTC 3954 / HTE831).